An 86-amino-acid polypeptide reads, in one-letter code: UPF0147 protein PYRAB16980 (86 aa).

It belongs to the UPF0147 family.

The protein is UPF0147 protein PYRAB16980 of Pyrococcus abyssi (strain GE5 / Orsay).